The chain runs to 312 residues: Ribonuclease HIII (312 aa).

Residues 95–311 (FNCIGSDEAG…REKAQKILKP (217 aa)) enclose the RNase H type-2 domain. Residues D101, E102, and D206 each contribute to the a divalent metal cation site.

Belongs to the RNase HII family. RnhC subfamily. It depends on Mn(2+) as a cofactor. The cofactor is Mg(2+).

It is found in the cytoplasm. It catalyses the reaction Endonucleolytic cleavage to 5'-phosphomonoester.. Endonuclease that specifically degrades the RNA of RNA-DNA hybrids. The sequence is that of Ribonuclease HIII from Staphylococcus aureus (strain Mu3 / ATCC 700698).